Here is a 221-residue protein sequence, read N- to C-terminus: Nucleolar protein 3 (221 aa).

A lipid anchor (N-myristoyl glycine) is attached at Gly-2. The region spanning 4–95 (MQERPSETID…MPDPAWDWQH (92 aa)) is the CARD domain. An essential for interaction with BAX region spans residues 20-70 (VETLQADSGLLLDALVARGVLTGPEYEALDALPDAERRVRRLLLLVQSKGE). Residues 107-221 (PPCPGHWTPE…GDESEGCENT (115 aa)) are disordered. Residues 132 to 143 (EEEEIGGPEDSE) show a composition bias toward acidic residues. The residue at position 149 (Thr-149) is a Phosphothreonine; by CK2. 2 stretches are compositionally biased toward acidic residues: residues 165–201 (PDLE…EPEP) and 209–221 (FQEG…CENT).

As to quaternary structure, oligomerizes (via CARD doamin). Interacts (via CARD domain) with CASP2; inhibits CASP2 activity in a phosphorylation-dependent manner. Interacts with CASP8; decreases CASP8 activity in a mitochondria localization- and phosphorylation-dependent manner and this interaction is dissociated by calcium. Interacts with TFPT; translocates NOL3 into the nucleus and negatively regulated TFPT-induced cell death. Interacts directly (via CARD domain) with FAS and FADD (via DED domain); inhibits death-inducing signaling complex (DISC) assembly by inhibiting the increase in FAS-FADD binding induced by FAS activation. Interacts (via CARD domain) with BAX (via a C-terminal 33 residues); inhibits BAX activation and translocation and consequently cytochrome c release from mitochondria. Interacts with PPM1G; may dephosphorylate NOL3. Interacts (via CARD domain) with BBC3 (via BH3 domain); preventing the association of BBC3 with BCL2 and resulting in activation of CASP8. Interacts (via CARD domain) with BAD(via BH3 domain); preventing the association of BAD with BCL2. Interacts directly (via CARD domain) with TNFRSF1A; inhibits TNF-signaling pathway. In terms of processing, phosphorylation at Thr-149 is required for its antiapoptotic effect by blocking death-inducing signaling complex (DISC) activity through the control of interaction with CASP8. Phosphorylation at Thr-149 results in translocation to mitochondria and this translocation enables the binding to CASP8. Dephosphorylated at Thr-149 by calcineurin; doesn't inhibit the association between FADD and CASP8 and the consequent apoptosis. Polyubiquitinated by MDM2; promoting proteasomal-dependent degradation in response to apoptotic stimuli. In terms of tissue distribution, highly expressed in skeletal muscle, heart and medulla.

Its subcellular location is the cytoplasm. It is found in the mitochondrion. The protein resides in the sarcoplasmic reticulum. It localises to the membrane. In terms of biological role, apoptosis repressor that blocks multiple modes of cell death. Inhibits extrinsic apoptotic pathways through two different ways. Firstly by interacting with FAS and FADD upon FAS activation blocking death-inducing signaling complex (DISC) assembly. Secondly by interacting with CASP8 in a mitochondria localization- and phosphorylation-dependent manner, limiting the amount of soluble CASP8 available for DISC-mediated activation. Inhibits intrinsic apoptotic pathway in response to a wide range of stresses, through its interaction with BAX resulting in BAX inactivation, preventing mitochondrial dysfunction and release of pro-apoptotic factors. Inhibits calcium-mediated cell death by functioning as a cytosolic calcium buffer, dissociating its interaction with CASP8 and maintaining calcium homeostasis. Negatively regulates oxidative stress-induced apoptosis by phosphorylation-dependent suppression of the mitochondria-mediated intrinsic pathway, by blocking CASP2 activation and BAX translocation. Negatively regulates hypoxia-induced apoptosis in part by inhibiting the release of cytochrome c from mitochondria in a caspase-independent manner. Also inhibits TNF-induced necrosis by preventing TNF-signaling pathway through TNFRSF1A interaction abrogating the recruitment of RIPK1 to complex I. Finally through its role as apoptosis repressor, promotes vascular remodeling through inhibition of apoptosis and stimulation of proliferation, in response to hypoxia. Inhibits too myoblast differentiation through caspase inhibition. This is Nucleolar protein 3 (Nol3) from Rattus norvegicus (Rat).